The sequence spans 108 residues: Peptidyl-prolyl cis-trans isomerase FKBP1A (108 aa).

The PPIase FKBP-type domain occupies 20 to 108 (GQTCVVHYTG…IFDVELLKLE (89 aa)). An N6-acetyllysine; alternate modification is found at lysine 53. Lysine 53 bears the N6-succinyllysine; alternate mark.

This sequence belongs to the FKBP-type PPIase family. FKBP1 subfamily. In terms of assembly, interacts with TGFBR1; prevents TGFBR1 phosphorylation by TGFBR2 and stabilizes it in the inactive conformation. Interacts with ACVR1B and SMAD7. Identified in a complex composed of RYR1, PDE4D, PKA, FKBP1A and protein phosphatase 1 (PP1). Interacts directly with RYR2 and RYR3. Interacts with GLMN; rapamycin and FK506 abolish the interaction with GLMN in a dose dependent manner. Interacts directly with RYR1.

Its subcellular location is the cytoplasm. The protein localises to the cytosol. It localises to the sarcoplasmic reticulum membrane. It catalyses the reaction [protein]-peptidylproline (omega=180) = [protein]-peptidylproline (omega=0). Inhibited by both FK506 and rapamycin. Its function is as follows. Keeps in an inactive conformation TGFBR1, the TGF-beta type I serine/threonine kinase receptor, preventing TGF-beta receptor activation in absence of ligand. May modulate the RYR1 calcium channel activity. PPIases accelerate the folding of proteins. It catalyzes the cis-trans isomerization of proline imidic peptide bonds in oligopeptides. This is Peptidyl-prolyl cis-trans isomerase FKBP1A (FKBP1A) from Bos taurus (Bovine).